We begin with the raw amino-acid sequence, 77 residues long: Dermatoxin-A1 (77 aa).

The N-terminal stretch at Met-1–Cys-22 is a signal peptide. Positions Glu-23–Glu-42 are excised as a propeptide. Gln-76 carries the post-translational modification Glutamine amide.

Belongs to the frog skin active peptide (FSAP) family. Dermatoxin subfamily. As to expression, expressed by the skin glands.

The protein localises to the secreted. In terms of biological role, possesses a potent antimicrobial activity against Gram-positive and Gram-negative bacteria. Probably acts by disturbing membrane functions with its amphipathic structure. The protein is Dermatoxin-A1 of Agalychnis annae (Blue-sided leaf frog).